The chain runs to 443 residues: Methyl-coenzyme M reductase subunit beta (443 aa).

Position 367 (Y367) interacts with coenzyme M. Residue G369 participates in coenzyme B binding.

Belongs to the methyl-coenzyme M reductase beta subunit family. In terms of assembly, MCR is a hexamer of two alpha, two beta, and two gamma chains, forming a dimer of heterotrimers. Coenzyme F430 is required as a cofactor.

It is found in the cytoplasm. The enzyme catalyses coenzyme B + methyl-coenzyme M = methane + coenzyme M-coenzyme B heterodisulfide. It participates in one-carbon metabolism; methyl-coenzyme M reduction; methane from methyl-coenzyme M: step 1/1. Component of the methyl-coenzyme M reductase (MCR) I that catalyzes the reductive cleavage of methyl-coenzyme M (CoM-S-CH3 or 2-(methylthio)ethanesulfonate) using coenzyme B (CoB or 7-mercaptoheptanoylthreonine phosphate) as reductant which results in the production of methane and the mixed heterodisulfide of CoB and CoM (CoM-S-S-CoB). This is the final step in methanogenesis. The protein is Methyl-coenzyme M reductase subunit beta (mcrB) of Methanococcus vannielii.